Here is a 465-residue protein sequence, read N- to C-terminus: Transposase for insertion sequence IS1202 (465 aa).

The Integrase catalytic domain occupies 157 to 340 (HPSRPRKKFA…APNPSERNLI (184 aa)).

Its function is as follows. Required for the transposition of the insertion element. The chain is Transposase for insertion sequence IS1202 from Streptococcus pneumoniae.